We begin with the raw amino-acid sequence, 320 residues long: Solute carrier family 35 member B1 (320 aa).

8 consecutive transmembrane segments (helical) span residues 9–29 (GLRL…YGIL), 49–69 (FALS…KLLI), 81–103 (QSWL…NSAL), 134–154 (YPLT…LFMY), 166–186 (TVGY…LTGV), 202–222 (MMLS…VLTG), 241–261 (IVLF…TVVY), and 283–303 (VILF…LVFL). A Di-lysine motif motif is present at residues 316–320 (KKPSH).

This sequence belongs to the nucleotide-sugar transporter family. SLC35B subfamily.

The protein localises to the endoplasmic reticulum membrane. Its function is as follows. Probable sugar transporter. The chain is Solute carrier family 35 member B1 (slc35b1) from Xenopus laevis (African clawed frog).